Here is a 338-residue protein sequence, read N- to C-terminus: UDP-glucose 4-epimerase (338 aa).

Residues Y11–I12, D31–S36, D58–I59, F80–K84, N99, S124, Y149, K153, and F178 contribute to the NAD(+) site. Substrate-binding residues include S124 and Y149. Catalysis depends on Y149, which acts as the Proton acceptor. Substrate contacts are provided by residues N179, N199–L200, S216–F218, R231, and R292–D295.

It belongs to the NAD(P)-dependent epimerase/dehydratase family. Homodimer. NAD(+) serves as cofactor.

It catalyses the reaction UDP-alpha-D-glucose = UDP-alpha-D-galactose. Its pathway is carbohydrate metabolism; galactose metabolism. Its function is as follows. Involved in the metabolism of galactose. Catalyzes the conversion of UDP-galactose (UDP-Gal) to UDP-glucose (UDP-Glc) through a mechanism involving the transient reduction of NAD. The chain is UDP-glucose 4-epimerase (galE) from Pasteurella multocida (strain Pm70).